The sequence spans 423 residues: Kynureninase (423 aa).

Pyridoxal 5'-phosphate contacts are provided by residues Leu-105, Ser-106, 133–136, Asp-218, His-221, and Tyr-243; that span reads FPSD. An N6-(pyridoxal phosphate)lysine modification is found at Lys-244. The pyridoxal 5'-phosphate site is built by Trp-273 and Asn-301.

This sequence belongs to the kynureninase family. In terms of assembly, homodimer. Pyridoxal 5'-phosphate is required as a cofactor.

It carries out the reaction L-kynurenine + H2O = anthranilate + L-alanine + H(+). The catalysed reaction is 3-hydroxy-L-kynurenine + H2O = 3-hydroxyanthranilate + L-alanine + H(+). Its pathway is amino-acid degradation; L-kynurenine degradation; L-alanine and anthranilate from L-kynurenine: step 1/1. It functions in the pathway cofactor biosynthesis; NAD(+) biosynthesis; quinolinate from L-kynurenine: step 2/3. Functionally, catalyzes the cleavage of L-kynurenine (L-Kyn) and L-3-hydroxykynurenine (L-3OHKyn) into anthranilic acid (AA) and 3-hydroxyanthranilic acid (3-OHAA), respectively. In Xanthomonas euvesicatoria pv. vesicatoria (strain 85-10) (Xanthomonas campestris pv. vesicatoria), this protein is Kynureninase.